Consider the following 145-residue polypeptide: NADH-quinone oxidoreductase subunit A (145 aa).

Transmembrane regions (helical) follow at residues 14 to 34, 66 to 86, and 96 to 116; these read FAVF…GAWF, FYLV…LYAW, and VGFV…FYLV.

The protein belongs to the complex I subunit 3 family. NDH-1 is composed of 13 different subunits. Subunits NuoA, H, J, K, L, M, N constitute the membrane sector of the complex.

Its subcellular location is the cell inner membrane. It carries out the reaction a quinone + NADH + 5 H(+)(in) = a quinol + NAD(+) + 4 H(+)(out). Functionally, NDH-1 shuttles electrons from NADH, via FMN and iron-sulfur (Fe-S) centers, to quinones in the respiratory chain. The immediate electron acceptor for the enzyme in this species is believed to be ubiquinone. Couples the redox reaction to proton translocation (for every two electrons transferred, four hydrogen ions are translocated across the cytoplasmic membrane), and thus conserves the redox energy in a proton gradient. This is NADH-quinone oxidoreductase subunit A from Erwinia tasmaniensis (strain DSM 17950 / CFBP 7177 / CIP 109463 / NCPPB 4357 / Et1/99).